We begin with the raw amino-acid sequence, 435 residues long: 5-methylthioadenosine/S-adenosylhomocysteine deaminase (435 aa).

The Zn(2+) site is built by histidine 65 and histidine 67. 3 residues coordinate substrate: glutamate 94, arginine 150, and histidine 189. Histidine 216 contributes to the Zn(2+) binding site. Residues glutamate 219 and aspartate 304 each contribute to the substrate site. Aspartate 304 is a binding site for Zn(2+).

It belongs to the metallo-dependent hydrolases superfamily. MTA/SAH deaminase family. Requires Zn(2+) as cofactor.

It carries out the reaction S-adenosyl-L-homocysteine + H2O + H(+) = S-inosyl-L-homocysteine + NH4(+). The catalysed reaction is S-methyl-5'-thioadenosine + H2O + H(+) = S-methyl-5'-thioinosine + NH4(+). In terms of biological role, catalyzes the deamination of 5-methylthioadenosine and S-adenosyl-L-homocysteine into 5-methylthioinosine and S-inosyl-L-homocysteine, respectively. Is also able to deaminate adenosine. The polypeptide is 5-methylthioadenosine/S-adenosylhomocysteine deaminase (Bacillus cereus (strain B4264)).